A 115-amino-acid chain; its full sequence is Large ribosomal subunit protein bL19 (115 aa).

The protein belongs to the bacterial ribosomal protein bL19 family.

In terms of biological role, this protein is located at the 30S-50S ribosomal subunit interface and may play a role in the structure and function of the aminoacyl-tRNA binding site. The polypeptide is Large ribosomal subunit protein bL19 (Oleidesulfovibrio alaskensis (strain ATCC BAA-1058 / DSM 17464 / G20) (Desulfovibrio alaskensis)).